The sequence spans 1175 residues: MAQVEDYSSLHRLRKNSEILSNANKILVANRGEIPIRIFRSAHELSMQTVAIYSHEDRLSMHRLKADEAYVIGARGQYSPVQAYLQIDEIINIALEHNVSMIHPGYGFLSENSEFARKVEDSGMIWIGPPHNVIDAVGDKVSARNLAGKCNVPVVPGTDGPIDSVEQAQEFVDKYGYPVIIKAAFGGGGRGMRVVREGESIADAFQRATSEAKTAFGNGTCFIERFLDKPKHIEVQLLADNYGNVIHLFERDCSVQRRHQKVVEIAPAKTLPVEVRDAILTDAVKLAKAANYRNAGTAEFLVDNQNRHYFIEINPRIQVEHTITEEVTGVDIVAAQIQIAAGASLQQLGLLQDKITTRGFAIQCRITTEDPAKNFQPDTGKIEVYRSSGGNGVRLDGGNGFAGAIISPHYDSMLVKCSTSGSNYEIARRKMIRALVEFRIRGVKTNIPFLLALLTHPTFVSGDCWTTFIDDTPSLFEMVQSKNRAQKLLSYLADLCVNGSSIKGQIGLPKLTRDADIPVIHDINGWDIDIKNTPPPESFRQYLLDYGPEQFANQIRAFDGCLIMDTTWRDAHQSLLATRVRTIDLLNIAPATAHAFRYAFALECWGGATFDVAMRFLHEDPWDRLRKLRKAVPNIPFQMLLRGANGVAYSSLPDNAIDHFVKQAKDAGVDIFRVFDALNDLEQLKVGVDAVKKAGGVVEATVCYSGDMLKPGKKYNLKYYLETVDKIMEMGTHLLGIKDMAGTLKPAAAKLLISSIRKKYPSVPIHVHTHDSAGTGVITYVACALAGADVVDCAVNSMSGLTSQPSMSAFIAALDNEINTGITEQNAREIDAYWSEMRLLYSCFEADLKGPDPEVYNHEIPGGQLTNLLFQAQQVGLGEKWLETKKAYEEANMLLGDIVKVTPTSKVVGDLAQFMVSNKLSPKDVERLASELDFPDSVLDFFEGLMGTPYGGFPEPLRTNILAGKRRKLTRRPGLELEPFDLKKIKEELQSRFGNSITECDVASYNMYPKVFESFKKIQEKYGDLSVLPTRFFLAPPKLNEEISVEIEQGKTFVIKVMAIGDLSPQTGTREVYFEFNGEMRKVTVEDKLAAVETVTRPKADAHNPNEVGAPMAGVVIEVRVHPGVEVKKGDPLCVLSAMKMEMVISSPVSGRVGEVIVHENDSVDAGDLICKITK.

The Biotin carboxylation domain maps to 22-474; sequence NANKILVANR…WTTFIDDTPS (453 aa). 3 residues coordinate ATP: Lys140, Glu224, and His259. The region spanning 144–341 is the ATP-grasp domain; sequence RNLAGKCNVP…IVAAQIQIAA (198 aa). Residue Arg316 is part of the active site. Positions 561-828 constitute a Pyruvate carboxyltransferase domain; sequence CLIMDTTWRD…NTGITEQNAR (268 aa). Substrate is bound by residues 569-573 and Arg642; that span reads RDAHQ. A divalent metal cation is bound at residue Asp570. Positions 738, 768, and 770 each coordinate a divalent metal cation. Lys738 is subject to N6-carboxylysine. Thr902 is a binding site for substrate. One can recognise a Biotinyl-binding domain in the interval 1099 to 1174; that stretch reads KADAHNPNEV…DAGDLICKIT (76 aa). Lys1140 bears the N6-biotinyllysine mark.

The cofactor is biotin. It depends on Zn(2+) as a cofactor.

Its subcellular location is the cytoplasm. The catalysed reaction is hydrogencarbonate + pyruvate + ATP = oxaloacetate + ADP + phosphate + H(+). Its pathway is carbohydrate biosynthesis; gluconeogenesis. Functionally, pyruvate carboxylase catalyzes a 2-step reaction, involving the ATP-dependent carboxylation of the covalently attached biotin in the first step and the transfer of the carboxyl group to pyruvate in the second. The chain is Pyruvate carboxylase (PYC) from Pichia angusta (Yeast).